Here is a 280-residue protein sequence, read N- to C-terminus: UDP-2,3-diacylglucosamine pyrophosphatase LpxI (280 aa).

Substrate is bound by residues A12, 74–75, Q169, 187–188, K214, and 226–233; these read NV, TD, and LPTIGVAT.

It belongs to the LpxI family. Homodimer. Requires Mg(2+) as cofactor.

Its subcellular location is the cell inner membrane. The catalysed reaction is UDP-2-N,3-O-bis[(3R)-3-hydroxytetradecanoyl]-alpha-D-glucosamine + H2O = 2-N,3-O-bis[(3R)-3-hydroxytetradecanoyl]-alpha-D-glucosaminyl 1-phosphate + UMP + 2 H(+). Its pathway is glycolipid biosynthesis; lipid IV(A) biosynthesis; lipid IV(A) from (3R)-3-hydroxytetradecanoyl-[acyl-carrier-protein] and UDP-N-acetyl-alpha-D-glucosamine: step 4/6. With respect to regulation, inhibited by high concentrations of Cu(2+) and Zn(2+). Completely inhibited by EDTA in vitro. Hydrolyzes the pyrophosphate bond of UDP-2,3-diacylglucosamine to form 2,3-diacylglucosamine 1-phosphate (lipid X) and UMP by catalyzing the attack of water at the beta-P atom. Involved in the biosynthesis of lipid A, a phosphorylated glycolipid that anchors the lipopolysaccharide to the outer membrane of the cell. Can functionally complement lpxH deficiency in E.coli. Cannot use CDP-diacylglycerol as substrate. The chain is UDP-2,3-diacylglucosamine pyrophosphatase LpxI from Caulobacter vibrioides (strain ATCC 19089 / CIP 103742 / CB 15) (Caulobacter crescentus).